Consider the following 247-residue polypeptide: MLRFIQKFSQASSKILKYSFPVGLRTSRTDILSLKMSLQQNFSPCPRPWLSSSFPAYMSKTQCYHTSPCSFKKQQKQALLARPSSTITYLTDSPKPALCVTLAGLIPFVAPPLVMLMTKTYIPILAFTQMAYGASFLSFLGGIRWGFALPEGSPAKPDYLNLASSAAPLFFSWFAFLISERLSEAIVTVIMGMGVAFHLELFLLPHYPNWFKALRIVVTLLATFSFIITLVVKSSFPEKGHKRPGQV.

5 helical membrane-spanning segments follow: residues 97–117 (ALCV…VMLM), 122–142 (IPIL…FLGG), 159–179 (YLNL…FLIS), 185–205 (AIVT…FLLP), and 216–236 (IVVT…KSSF).

The protein resides in the membrane. This chain is Transmembrane protein 69 (TMEM69), found in Homo sapiens (Human).